The chain runs to 506 residues: Anaerobic nitric oxide reductase transcription regulator NorR (506 aa).

D57 bears the 4-aspartylphosphate mark. The Sigma-54 factor interaction domain occupies 187–416 (MIGLSPAMTQ…LEHAIHRAVV (230 aa)). Residues 215–222 (GETGTGKE) and 278–287 (ADNGTLFLDE) contribute to the ATP site. Residues 481–500 (WAASARALETDVANLHRLAK) constitute a DNA-binding region (H-T-H motif).

Its pathway is nitrogen metabolism; nitric oxide reduction. Its function is as follows. Required for the expression of anaerobic nitric oxide (NO) reductase, acts as a transcriptional activator for at least the norVW operon. Activation also requires sigma-54. In Salmonella paratyphi C (strain RKS4594), this protein is Anaerobic nitric oxide reductase transcription regulator NorR.